A 307-amino-acid polypeptide reads, in one-letter code: Quinolinate synthase (307 aa).

H20 and S37 together coordinate iminosuccinate. A [4Fe-4S] cluster-binding site is contributed by C82. Iminosuccinate-binding positions include 108–110 (YIN) and S125. Residue C168 coordinates [4Fe-4S] cluster. Residues 194-196 (HPE) and T219 each bind iminosuccinate. Position 264 (C264) interacts with [4Fe-4S] cluster.

It belongs to the quinolinate synthase family. Type 2 subfamily. The cofactor is [4Fe-4S] cluster.

Its subcellular location is the cytoplasm. It catalyses the reaction iminosuccinate + dihydroxyacetone phosphate = quinolinate + phosphate + 2 H2O + H(+). The protein operates within cofactor biosynthesis; NAD(+) biosynthesis; quinolinate from iminoaspartate: step 1/1. Its function is as follows. Catalyzes the condensation of iminoaspartate with dihydroxyacetone phosphate to form quinolinate. This Pyrobaculum aerophilum (strain ATCC 51768 / DSM 7523 / JCM 9630 / CIP 104966 / NBRC 100827 / IM2) protein is Quinolinate synthase.